The sequence spans 489 residues: Ketol-acid reductoisomerase (NADP(+)) (489 aa).

Positions 16-207 constitute a KARI N-terminal Rossmann domain; sequence IKKCRFMEKK…GGHRAGVLES (192 aa). NADP(+) contacts are provided by residues 44–47, Arg-67, Ser-77, and 107–109; these read CGSQ and DKQ. The active site involves His-131. NADP(+) is bound at residue Gly-157. KARI C-terminal knotted domains lie at 208 to 343 and 344 to 483; these read SFVA…QSPD and YDKK…MKNM. Residues Asp-216, Glu-220, Glu-388, and Glu-392 each coordinate Mg(2+). Ser-413 lines the substrate pocket.

Belongs to the ketol-acid reductoisomerase family. The cofactor is Mg(2+).

The catalysed reaction is (2R)-2,3-dihydroxy-3-methylbutanoate + NADP(+) = (2S)-2-acetolactate + NADPH + H(+). The enzyme catalyses (2R,3R)-2,3-dihydroxy-3-methylpentanoate + NADP(+) = (S)-2-ethyl-2-hydroxy-3-oxobutanoate + NADPH + H(+). It participates in amino-acid biosynthesis; L-isoleucine biosynthesis; L-isoleucine from 2-oxobutanoate: step 2/4. The protein operates within amino-acid biosynthesis; L-valine biosynthesis; L-valine from pyruvate: step 2/4. Its function is as follows. Involved in the biosynthesis of branched-chain amino acids (BCAA). Catalyzes an alkyl-migration followed by a ketol-acid reduction of (S)-2-acetolactate (S2AL) to yield (R)-2,3-dihydroxy-isovalerate. In the isomerase reaction, S2AL is rearranged via a Mg-dependent methyl migration to produce 3-hydroxy-3-methyl-2-ketobutyrate (HMKB). In the reductase reaction, this 2-ketoacid undergoes a metal-dependent reduction by NADPH to yield (R)-2,3-dihydroxy-isovalerate. In Buchnera aphidicola subsp. Diuraphis noxia, this protein is Ketol-acid reductoisomerase (NADP(+)).